Consider the following 219-residue polypeptide: Cytidylate kinase (219 aa).

21-29 (GPAASGKGT) contacts ATP.

This sequence belongs to the cytidylate kinase family. Type 1 subfamily.

It is found in the cytoplasm. It carries out the reaction CMP + ATP = CDP + ADP. It catalyses the reaction dCMP + ATP = dCDP + ADP. This is Cytidylate kinase from Rickettsia conorii (strain ATCC VR-613 / Malish 7).